The sequence spans 87 residues: Small ribosomal subunit protein uS17 (87 aa).

Belongs to the universal ribosomal protein uS17 family. In terms of assembly, part of the 30S ribosomal subunit.

One of the primary rRNA binding proteins, it binds specifically to the 5'-end of 16S ribosomal RNA. The chain is Small ribosomal subunit protein uS17 from Cytophaga hutchinsonii (strain ATCC 33406 / DSM 1761 / CIP 103989 / NBRC 15051 / NCIMB 9469 / D465).